The sequence spans 192 residues: MGTVLIHVCCAPDLLTTIFHVRDAEFFFYNPNIQPLSEYEKRREAVDKVANHFSLNVRYGEYSTEEIRKWYTAVKDYKDLGEGSKRCERCISFLLERTAQEARKRGHESFSTTLLASPRKNLPMIENIGKTIEEKYGVKFFFKNFRKGGAYQEGVRLSKELGIYRQNYCGCVFSLLERREKHAEISRKRGHM.

Residues Cys9, Cys10, Cys87, and Cys90 each coordinate [4Fe-4S] cluster. Cysteines 169 and 171 form a disulfide.

The protein belongs to the QueH family.

The catalysed reaction is epoxyqueuosine(34) in tRNA + AH2 = queuosine(34) in tRNA + A + H2O. The protein operates within tRNA modification; tRNA-queuosine biosynthesis. Catalyzes the conversion of epoxyqueuosine (oQ) to queuosine (Q), which is a hypermodified base found in the wobble positions of tRNA(Asp), tRNA(Asn), tRNA(His) and tRNA(Tyr). This is Epoxyqueuosine reductase QueH from Thermotoga maritima (strain ATCC 43589 / DSM 3109 / JCM 10099 / NBRC 100826 / MSB8).